The following is a 431-amino-acid chain: Beta-1,4-glucuronyltransferase 1 (431 aa).

Residues 1-11 (MHFSKKCSVFK) are Cytoplasmic-facing. Residues 12 to 32 (VVLSALLIVALLQLLYLSFLS) traverse the membrane as a helical segment. At 33 to 431 (KLHGKQQRYK…AKYPTSPRRC (399 aa)) the chain is on the lumenal side. N216 carries an N-linked (GlcNAc...) asparagine glycan. Residues D241 and D243 each coordinate Mn(2+). N-linked (GlcNAc...) asparagine glycosylation occurs at N314.

This sequence belongs to the glycosyltransferase 49 family. Requires Mn(2+) as cofactor.

The protein localises to the golgi apparatus membrane. The catalysed reaction is 3-O-[beta-D-Xyl-(1-&gt;4)-Rib-ol-P-Rib-ol-P-3-beta-D-GalNAc-(1-&gt;3)-beta-D-GlcNAc-(1-&gt;4)-(O-6-P-alpha-D-Man)]-Thr-[protein] + UDP-alpha-D-glucuronate = 3-O-[beta-D-GlcA-(1-&gt;3)-beta-D-Xyl-(1-&gt;4)-Rib-ol-P-Rib-ol-P-3-beta-D-GalNAc-(1-&gt;3)-beta-D-GlcNAc-(1-&gt;4)-(O-6-P-alpha-D-Man)]-Thr-[protein] + UDP + H(+). It functions in the pathway protein modification; protein glycosylation. In terms of biological role, beta-1,4-glucuronyltransferase involved in O-mannosylation of alpha-dystroglycan (DAG1). Transfers a glucuronic acid (GlcA) residue onto a xylose (Xyl) acceptor to produce the glucuronyl-beta-1,4-xylose-beta disaccharide primer, which is further elongated by LARGE, during synthesis of phosphorylated O-mannosyl glycan. Phosphorylated O-mannosyl glycan is a carbohydrate structure present in alpha-dystroglycan (DAG1), which is required for binding laminin G-like domain-containing extracellular proteins with high affinity. Required for axon guidance; via its function in O-mannosylation of alpha-dystroglycan (DAG1). The sequence is that of Beta-1,4-glucuronyltransferase 1 from Danio rerio (Zebrafish).